Here is a 240-residue protein sequence, read N- to C-terminus: Ubiquinone biosynthesis O-methyltransferase (240 aa).

S-adenosyl-L-methionine contacts are provided by Arg36, Gly66, Asp87, and Met129.

The protein belongs to the methyltransferase superfamily. UbiG/COQ3 family.

The catalysed reaction is a 3-demethylubiquinol + S-adenosyl-L-methionine = a ubiquinol + S-adenosyl-L-homocysteine + H(+). It catalyses the reaction a 3-(all-trans-polyprenyl)benzene-1,2-diol + S-adenosyl-L-methionine = a 2-methoxy-6-(all-trans-polyprenyl)phenol + S-adenosyl-L-homocysteine + H(+). Its pathway is cofactor biosynthesis; ubiquinone biosynthesis. Functionally, O-methyltransferase that catalyzes the 2 O-methylation steps in the ubiquinone biosynthetic pathway. The sequence is that of Ubiquinone biosynthesis O-methyltransferase from Pelagibacter ubique (strain HTCC1062).